An 89-amino-acid chain; its full sequence is Small ribosomal subunit protein uS19 (89 aa).

It belongs to the universal ribosomal protein uS19 family.

In terms of biological role, protein S19 forms a complex with S13 that binds strongly to the 16S ribosomal RNA. The chain is Small ribosomal subunit protein uS19 from Stenotrophomonas maltophilia (strain K279a).